Consider the following 583-residue polypeptide: MSEKLDKEDVLYKKRHSIAHVMAEAVIELFPNTKIAIGPPIKDGFYYDFDFEKHIIEDDLLLIEQKMREILKTGSSFVKEVITKEQALMLFKDEPYKIDLIHELDIADEISIYKSHNFTDLCKGPHIDNMGKIDPKAFKLISIAGAYWRGDEKNKMLTRIYGTLWNNEKDLKAYLKLREEIKRRDHRKLGRELDLFSVHEEIGPGLIFFHPSGARIRALIEDFWREEHFKNGYDILFTPHVGKSWLWETSGHLDFYKESMFEKMEMDKSNYYVKPMNCPFHIAIYNTGRHSYRDLPFRWAELGTVYRYEKVGALHGTMRVRGFTQDDAHIICTYDQVKFEVQEVLRFALYMWNKFGFTALKAYLSTKPEKSVGDEDDWIMSVKVLKEALINLGIDYDIDEGGGAFYGPKIDLKIIDSLGREWQMSTIQFDFNLPARFKMTYTAEDGKERQPFMIHRALLGSIERFFGILVEHYGGAFPVWLAPLQVVIIPVNNIVEEYALEVLSRFKKEGIRIKLDNDCNMRMNAKIRQYQSQKVPYMFIVGEKEVVEGKISIRTRTNEQINGLELKEALEFVKLKVSNKEIL.

Residues 185 to 478 (DHRKLGRELD…LVEHYGGAFP (294 aa)) are catalytic. 3 residues coordinate Zn(2+): Cys-278, His-329, and His-455.

It belongs to the class-II aminoacyl-tRNA synthetase family. Homodimer. Zn(2+) serves as cofactor.

The protein localises to the cytoplasm. It catalyses the reaction tRNA(Thr) + L-threonine + ATP = L-threonyl-tRNA(Thr) + AMP + diphosphate + H(+). In terms of biological role, catalyzes the attachment of threonine to tRNA(Thr) in a two-step reaction: L-threonine is first activated by ATP to form Thr-AMP and then transferred to the acceptor end of tRNA(Thr). Also edits incorrectly charged L-seryl-tRNA(Thr). This is Threonine--tRNA ligase from Borrelia turicatae (strain 91E135).